The following is an 869-amino-acid chain: Iron-sulfur cluster assembly SufBD family protein ML0593 (869 aa).

The 134-residue stretch at 344–477 (LLGLWLGDGH…VRQLAIGCGL (134 aa)) folds into the DOD-type homing endonuclease domain.

Belongs to the iron-sulfur cluster assembly SufBD family. This protein undergoes a protein self splicing that involves a post-translational excision of the intervening region (intein) followed by peptide ligation.

The chain is Iron-sulfur cluster assembly SufBD family protein ML0593 from Mycobacterium leprae (strain TN).